An 816-amino-acid polypeptide reads, in one-letter code: Transcription factor qa-1f (816 aa).

Residues Cys-76–Cys-103 constitute a DNA-binding region (zn(2)-C6 fungal-type). Polar residues predominate over residues Ser-184 to Ile-202. A disordered region spans residues Ser-184–Leu-235.

It localises to the nucleus. Its function is as follows. Transcription activator; part of the qa gene cluster that mediates the catabolism of quinic acid (QA) and as such, allows the use of QA as a sole carbon source. Activates the expression of qa cluster genes by binding to a 16 base-pair consensus sequence 5'-GGRTAARYRYTTAYCC-3' present in the promoters of the target genes. Regulates its own expression. May regulate the expression of many other genes inclusing genes with products in 8 mutually connected metabolic pathways: (1) starch and sucrose metabolism; (2) glycolysis/glucanogenesis; (3) TCA Cycle; (4) butanoate metabolism; (5) pyruvate metabolism; (6) aromatic amino acid and QA metabolism; (7) valine, leucine, and isoleucine degradation; and (8) transport of sugars and amino acids. The polypeptide is Transcription factor qa-1f (Neurospora crassa (strain ATCC 24698 / 74-OR23-1A / CBS 708.71 / DSM 1257 / FGSC 987)).